The sequence spans 346 residues: Alkanal monooxygenase alpha chain (346 aa).

In terms of assembly, heterodimer of an alpha and a beta chain.

The catalysed reaction is a long-chain fatty aldehyde + FMNH2 + O2 = a long-chain fatty acid + hnu + FMN + H2O + 2 H(+). In terms of biological role, light-emitting reaction in luminous bacteria. The sequence is that of Alkanal monooxygenase alpha chain (luxA) from Photobacterium phosphoreum.